The following is a 483-amino-acid chain: Type 2 glycosyltransferase (483 aa).

Residues 21 to 41 (AVVYLSALFTPWFTAFCVLWL) traverse the membrane as a helical segment. The short motif at 156–158 (DDD) is the Dxd motif element. Residues 301 to 305 (QCSRW) carry the QxxxRW motif motif. Asn313 carries an N-linked (GlcNAc...) asparagine glycan. The next 3 membrane-spanning stretches (helical) occupy residues 336–356 (IATFTSLAFVFDFLILAALWW), 369–389 (AIYAQLAFLAFSKVVKLVGLF), and 396–416 (IMFLPVSIIFGYFHGLIKIYA). Asn421 carries an N-linked (GlcNAc...) asparagine glycan.

Belongs to the GT2 glycosyltransferase family.

Its subcellular location is the cell membrane. Glycosyltransferase that plays an important role in infection-related morphogenesis and pathogenesis. Involved in stress tolerance and hyphal hydrophobicity via its regulation of the expression of nydrophobin MPG1. May regulate growth, pathogenicity, and cell wall integrity (CWI) through glycosylation of heat shock protein SSB1, and other (unidentified) substrates may contribute to conidiation. Candidate proteins as potential substrates of GT2 include several heat shock proteins (SSB1/MGG_02503, MGG_06759 and MGG_06958), two coiled-coil domain-containing proteins (MGG_04321 and MGG_09571), aminopeptidase 2 (MGG_16472), and a nuclease domain-containing protein (MGG_12646). The chain is Type 2 glycosyltransferase from Pyricularia oryzae (strain 70-15 / ATCC MYA-4617 / FGSC 8958) (Rice blast fungus).